A 558-amino-acid polypeptide reads, in one-letter code: Mitochondrial nucleoid-associated protein 1 (558 aa).

Over 1-527 (MGAAEPRMEV…VQCNTTIKKS (527 aa)) the chain is Extracellular. Disordered stretches follow at residues 29–88 (KMRG…SWTA), 130–205 (LQRV…KLGT), and 222–269 (LSDR…KTQK). The span at 36-45 (SADQNVSQSK) shows a compositional bias: polar residues. Residues 51 to 81 (QKEKSPTRDLTRAKEKELEVDRPKRAVKAET) are compositionally biased toward basic and acidic residues. 2 stretches are compositionally biased toward polar residues: residues 131–144 (QRVTTPWSPASDAT) and 187–197 (SSTQPHANPAT). Residues 528 to 548 (GVGGLTMLFAGYFILCCNWSF) traverse the membrane as a helical segment. The Cytoplasmic portion of the chain corresponds to 549-558 (KHLKLQHWRK).

The protein resides in the mitochondrion inner membrane. Its subcellular location is the mitochondrion matrix. The protein localises to the mitochondrion nucleoid. In terms of biological role, critical regulator of mitochondrial DNA (mtDNA) abundance. Binds dsDNA throughout the mitochondrial genome without sequence specificity and controls mtDNA copy number by promoting its replication. Also plays important roles in mitochondrial metabolism and cell proliferation. The polypeptide is Mitochondrial nucleoid-associated protein 1 (Mus musculus (Mouse)).